The following is a 305-amino-acid chain: U6 small nuclear RNA (adenine-(43)-N(6))-methyltransferase (305 aa).

S-adenosyl-L-methionine-binding residues include Arg87, Gly112, Glu135, Thr166, and Asn188. The disordered stretch occupies residues 197 to 221; it reads PNPLGGNTRNPERRPAPNNARTGSQ.

Belongs to the methyltransferase superfamily. METTL16/RlmF family.

It carries out the reaction adenosine in U6 snRNA + S-adenosyl-L-methionine = N(6)-methyladenosine in U6 snRNA + S-adenosyl-L-homocysteine + H(+). In terms of biological role, RNA N6-methyltransferase that mediates N6-methylation of adenine of U6 small nuclear RNA (U6 snRNA). The polypeptide is U6 small nuclear RNA (adenine-(43)-N(6))-methyltransferase (Drosophila melanogaster (Fruit fly)).